The sequence spans 232 residues: Chaperone protein CssC (232 aa).

Residues 1 to 20 form the signal peptide; sequence MKSKLIILLMLVPFSSFSTE.

It belongs to the periplasmic pilus chaperone family.

The protein resides in the periplasm. Its function is as follows. Involved in the biogenesis of the CS6 fimbria. In Escherichia coli, this protein is Chaperone protein CssC (cssC).